A 244-amino-acid polypeptide reads, in one-letter code: tRNA pseudouridine synthase A (244 aa).

Catalysis depends on D52, which acts as the Nucleophile. Residue Y111 participates in substrate binding.

It belongs to the tRNA pseudouridine synthase TruA family. In terms of assembly, homodimer.

It carries out the reaction uridine(38/39/40) in tRNA = pseudouridine(38/39/40) in tRNA. Its function is as follows. Formation of pseudouridine at positions 38, 39 and 40 in the anticodon stem and loop of transfer RNAs. In Thermosipho africanus (strain TCF52B), this protein is tRNA pseudouridine synthase A.